The chain runs to 215 residues: Casparian strip membrane protein 3 (215 aa).

The disordered stretch occupies residues 1 to 26 (MDSEKTGEAKITIQEPKAADPKGKGI). The Cytoplasmic segment spans residues 1–55 (MDSEKTGEAKITIQEPKAADPKGKGIADAPPPPVVVTTAKAIQKLPRGGWKKGVA). The helical transmembrane segment at 56-76 (IFDFVVRLCAIATGLAATGIM) threads the bilayer. Residues 77–101 (GTTEQTLPFFTQFFQFHAEYNDLPT) lie on the Extracellular side of the membrane. Residues 102–122 (FMFFVFANGIASGYLILSLPF) form a helical membrane-spanning segment. Residues 123 to 136 (SIVCIVRPLAIVPR) lie on the Cytoplasmic side of the membrane. Residues 137–157 (LLLIIFDTVVMALTIAAASAA) form a helical membrane-spanning segment. The Extracellular segment spans residues 158 to 189 (AAIVYLAHNGNSNANWNAICQQFNDFCQQTST). Residues 190-210 (AVVASFITAAMLTFLIVLSAF) traverse the membrane as a helical segment. Over 211-215 (ALKRN) the chain is Cytoplasmic.

This sequence belongs to the Casparian strip membrane proteins (CASP) family. Homodimer and heterodimers.

It localises to the cell membrane. Functionally, regulates membrane-cell wall junctions and localized cell wall deposition. Required for establishment of the Casparian strip membrane domain (CSD) and the subsequent formation of Casparian strips, a cell wall modification of the root endodermis that determines an apoplastic barrier between the intraorganismal apoplasm and the extraorganismal apoplasm and prevents lateral diffusion. This chain is Casparian strip membrane protein 3, found in Ricinus communis (Castor bean).